The sequence spans 320 residues: MSTFETLIKRGGNEAIKINPPTGADFHITSRGSDWFWTCFCCYLLFGLILTFLMFRKPVNDRFFYLTGIAPNFFMCIAYFTMASNLGWIPVKAKYNHVQTSTQKEHPGYRQIFYSRFVGWFLALPWPIIQICMLAGTPFWQMAFNVCITEFFTVCWLIAACVHSTYKWGYYTIGLGAAIVVSISVMTTSYNLVKQRDNDIRLTFLVFFSIIMFLWIIAYPTCFGITDGGNVLQPDSAGIFYGIIDLILMCFIPTLLVPIANHFGADKLGYHFGPSDAEAVMAPKAPVASPRPAATPNLSKDKKKKSKKSKKSKKSKKSEE.

Over 1–34 (MSTFETLIKRGGNEAIKINPPTGADFHITSRGSD) the chain is Extracellular. The chain crosses the membrane as a helical span at residues 35–55 (WFWTCFCCYLLFGLILTFLMF). At 56-62 (RKPVNDR) the chain is on the cytoplasmic side. Residues 63–83 (FFYLTGIAPNFFMCIAYFTMA) traverse the membrane as a helical segment. At 84–116 (SNLGWIPVKAKYNHVQTSTQKEHPGYRQIFYSR) the chain is on the extracellular side. A helical membrane pass occupies residues 117-137 (FVGWFLALPWPIIQICMLAGT). The Cytoplasmic segment spans residues 138–141 (PFWQ). The chain crosses the membrane as a helical span at residues 142–162 (MAFNVCITEFFTVCWLIAACV). Residues 163-167 (HSTYK) lie on the Extracellular side of the membrane. A helical membrane pass occupies residues 168-188 (WGYYTIGLGAAIVVSISVMTT). The Cytoplasmic portion of the chain corresponds to 189 to 204 (SYNLVKQRDNDIRLTF). The helical transmembrane segment at 205–225 (LVFFSIIMFLWIIAYPTCFGI) threads the bilayer. Topologically, residues 226 to 238 (TDGGNVLQPDSAG) are extracellular. The chain crosses the membrane as a helical span at residues 239-259 (IFYGIIDLILMCFIPTLLVPI). Residues 260-320 (ANHFGADKLG…KSKKSKKSEE (61 aa)) are Cytoplasmic-facing. Residues 285 to 320 (APVASPRPAATPNLSKDKKKKSKKSKKSKKSKKSEE) are disordered. Phosphoserine is present on serine 289. The residue at position 295 (threonine 295) is a Phosphothreonine. At serine 299 the chain carries Phosphoserine. Residues 301–320 (DKKKKSKKSKKSKKSKKSEE) show a composition bias toward basic residues.

This sequence belongs to the archaeal/bacterial/fungal opsin family.

The protein resides in the cell membrane. Its subcellular location is the mitochondrion. It localises to the bud. This is Protein MRH1 (MRH1) from Saccharomyces cerevisiae (strain ATCC 204508 / S288c) (Baker's yeast).